Reading from the N-terminus, the 281-residue chain is Fructose-bisphosphate aldolase class 1 (281 aa).

The active-site Schiff-base intermediate with dihydroxyacetone-P is the K191.

Belongs to the DeoC/FbaB aldolase family. Homooctamer.

It localises to the cytoplasm. It carries out the reaction beta-D-fructose 1,6-bisphosphate = D-glyceraldehyde 3-phosphate + dihydroxyacetone phosphate. Activated by citrate. This is Fructose-bisphosphate aldolase class 1 (fba) from Pyrococcus furiosus (strain ATCC 43587 / DSM 3638 / JCM 8422 / Vc1).